Consider the following 187-residue polypeptide: Calmodulin-like protein 30 (187 aa).

The disordered stretch occupies residues 21–47 (KPSRMFSRDRQSSGLSSPGPGGFSQPS). The segment covering 32–47 (SSGLSSPGPGGFSQPS) has biased composition (low complexity). 4 consecutive EF-hand domains span residues 46 to 81 (PSVN…LGQE), 82 to 117 (RAIE…SGGI), 129 to 152 (FDLN…LGER), and 153 to 187 (CSLE…SNNV). The Ca(2+) site is built by Asp59, Asp61, Asp63, Lys65, Glu70, Asp95, Asp97, Asp99, Glu106, Asp130, Asn132, Asp134, Lys136, Glu141, Asp166, Asp168, Asp170, and Glu177.

The protein belongs to the calmodulin family.

In terms of biological role, potential calcium sensor. This chain is Calmodulin-like protein 30, found in Arabidopsis thaliana (Mouse-ear cress).